Consider the following 376-residue polypeptide: Phosphoserine aminotransferase (376 aa).

Arginine 46 contributes to the L-glutamate binding site. Residues 80-81, phenylalanine 104, threonine 150, aspartate 172, and glutamine 195 each bind pyridoxal 5'-phosphate; that span reads AT. The residue at position 196 (lysine 196) is an N6-(pyridoxal phosphate)lysine. 247-248 is a pyridoxal 5'-phosphate binding site; the sequence is NT.

This sequence belongs to the class-V pyridoxal-phosphate-dependent aminotransferase family. SerC subfamily. Homodimer. Requires pyridoxal 5'-phosphate as cofactor.

It is found in the cytoplasm. It catalyses the reaction O-phospho-L-serine + 2-oxoglutarate = 3-phosphooxypyruvate + L-glutamate. It carries out the reaction 4-(phosphooxy)-L-threonine + 2-oxoglutarate = (R)-3-hydroxy-2-oxo-4-phosphooxybutanoate + L-glutamate. It functions in the pathway amino-acid biosynthesis; L-serine biosynthesis; L-serine from 3-phospho-D-glycerate: step 2/3. The protein operates within cofactor biosynthesis; pyridoxine 5'-phosphate biosynthesis; pyridoxine 5'-phosphate from D-erythrose 4-phosphate: step 3/5. Catalyzes the reversible conversion of 3-phosphohydroxypyruvate to phosphoserine and of 3-hydroxy-2-oxo-4-phosphonooxybutanoate to phosphohydroxythreonine. This is Phosphoserine aminotransferase from Corynebacterium glutamicum (strain R).